Reading from the N-terminus, the 131-residue chain is Glycine cleavage system H protein (131 aa).

In terms of domain architecture, Lipoyl-binding spans 24-106 (TVRVGITDYA…YGEGWLVDLR (83 aa)). Lysine 65 is modified (N6-lipoyllysine).

This sequence belongs to the GcvH family. The glycine cleavage system is composed of four proteins: P, T, L and H. (R)-lipoate serves as cofactor.

Its function is as follows. The glycine cleavage system catalyzes the degradation of glycine. The H protein shuttles the methylamine group of glycine from the P protein to the T protein. The sequence is that of Glycine cleavage system H protein from Mycolicibacterium smegmatis (strain ATCC 700084 / mc(2)155) (Mycobacterium smegmatis).